The following is a 1938-amino-acid chain: Autophagy-related protein 2 homolog A (1938 aa).

The region spanning 14–111 (ERVCRYLLHH…QLTLQPRRGP (98 aa)) is the Chorein N-terminal domain. A phosphoserine mark is found at S765, S878, S892, S894, S1266, S1301, and S1309. Residues 1242 to 1272 (DLHPPPRPPSPTEIAGQKLSESPASLPSCPP) form a disordered region. Residues 1315–1359 (LFPGERSGAPPPSPPVGGPAGSLGSCSEEKEDEREEEGDGDTLDS) are disordered. Over residues 1343-1359 (EKEDEREEEGDGDTLDS) the composition is skewed to acidic residues. Positions 1358 to 1404 (DSDEFCILDAPGLGIPPRDGEPVVTQLHPGPIVVRDGYFSRPIGSTD) are WIPI-interacting. A Phosphoserine modification is found at S1402. Disordered stretches follow at residues 1438-1476 (PHPGHRARTGLSGPRSSPSRCSGPNRPQNSWRTQGGSGR) and 1614-1657 (GETS…PSPP). Over residues 1446-1464 (TGLSGPRSSPSRCSGPNRP) the composition is skewed to low complexity.

Belongs to the ATG2 family. In terms of assembly, interacts with ATG9A (via C-terminus). Interacts (via WIPI-interacting region) with WDR45B/WIPI3. Interacts (via WIPI-interacting region) with WDR45/WIPI4. Interacts with TMEM41B. Interacts with VMP1.

It is found in the preautophagosomal structure membrane. The protein localises to the lipid droplet. The protein resides in the endoplasmic reticulum membrane. It carries out the reaction a 1,2-diacyl-sn-glycero-3-phospho-L-serine(in) = a 1,2-diacyl-sn-glycero-3-phospho-L-serine(out). It catalyses the reaction a 1,2-diacyl-sn-glycero-3-phosphoethanolamine(in) = a 1,2-diacyl-sn-glycero-3-phosphoethanolamine(out). Its function is as follows. Lipid transfer protein involved in autophagosome assembly. Tethers the edge of the isolation membrane (IM) to the endoplasmic reticulum (ER) and mediates direct lipid transfer from ER to IM for IM expansion. Binds to the ER exit site (ERES), which is the membrane source for autophagosome formation, and extracts phospholipids from the membrane source and transfers them to ATG9 (ATG9A or ATG9B) to the IM for membrane expansion. Lipid transfer activity is enhanced by WIPI1 and WDR45/WIPI4, which promote ATG2A-association with phosphatidylinositol 3-monophosphate (PI3P)-containing membranes. Also regulates lipid droplets morphology and distribution within the cell. The sequence is that of Autophagy-related protein 2 homolog A from Homo sapiens (Human).